The primary structure comprises 179 residues: Large ribosomal subunit protein uL5 (179 aa).

The protein belongs to the universal ribosomal protein uL5 family. In terms of assembly, part of the 50S ribosomal subunit; part of the 5S rRNA/L5/L18/L25 subcomplex. Contacts the 5S rRNA and the P site tRNA. Forms a bridge to the 30S subunit in the 70S ribosome.

This is one of the proteins that bind and probably mediate the attachment of the 5S RNA into the large ribosomal subunit, where it forms part of the central protuberance. In the 70S ribosome it contacts protein S13 of the 30S subunit (bridge B1b), connecting the 2 subunits; this bridge is implicated in subunit movement. Contacts the P site tRNA; the 5S rRNA and some of its associated proteins might help stabilize positioning of ribosome-bound tRNAs. The protein is Large ribosomal subunit protein uL5 of Syntrophus aciditrophicus (strain SB).